A 149-amino-acid chain; its full sequence is Large ribosomal subunit protein uL15 (149 aa).

Positions 1-64 (MVELHDLQPH…GQTPLYMRIP (64 aa)) are disordered. Positions 31–40 (TAGRGHKGQK) are enriched in basic residues.

The protein belongs to the universal ribosomal protein uL15 family. Part of the 50S ribosomal subunit.

Functionally, binds to the 23S rRNA. This chain is Large ribosomal subunit protein uL15, found in Aquifex aeolicus (strain VF5).